Here is a 697-residue protein sequence, read N- to C-terminus: Long-chain-fatty-acid--CoA ligase 6 (697 aa).

The helical; Signal-anchor for type III membrane protein transmembrane segment at 25–45 (LSATTLVSVGALAAVLAYWLT) threads the bilayer. The Cytoplasmic segment spans residues 46–697 (HRPKALQPPC…QIEELYLVSV (652 aa)).

Belongs to the ATP-dependent AMP-binding enzyme family. Mg(2+) serves as cofactor.

It localises to the mitochondrion outer membrane. Its subcellular location is the peroxisome membrane. The protein localises to the microsome membrane. It is found in the endoplasmic reticulum membrane. The enzyme catalyses a long-chain fatty acid + ATP + CoA = a long-chain fatty acyl-CoA + AMP + diphosphate. The catalysed reaction is (5Z,8Z,11Z,14Z)-eicosatetraenoate + ATP + CoA = (5Z,8Z,11Z,14Z)-eicosatetraenoyl-CoA + AMP + diphosphate. It catalyses the reaction 15-hydroxy-(5Z,8Z,11Z,13E)-eicosatetraenoate + ATP + CoA = 15-hydroxy-(5Z,8Z,11Z,13E)-eicosatetraenoyl-CoA + AMP + diphosphate. It carries out the reaction 12-hydroxy-(5Z,8Z,10E,14Z)-eicosatetraenoate + ATP + CoA = 12-hydroxy-(5Z,8Z,10E,14Z)-eicosatetraenoyl-CoA + AMP + diphosphate. The enzyme catalyses 5-hydroxy-(6E,8Z,11Z,14Z)-eicosatetraenoate + ATP + CoA = 5-hydroxy-(6E,8Z,11Z,14Z)-eicosatetraenoyl-CoA + AMP + diphosphate. The catalysed reaction is hexadecanoate + ATP + CoA = hexadecanoyl-CoA + AMP + diphosphate. It catalyses the reaction (E)-hexadec-2-enoate + ATP + CoA = (2E)-hexadecenoyl-CoA + AMP + diphosphate. Its function is as follows. Catalyzes the conversion of long-chain fatty acids to their active form acyl-CoA for both synthesis of cellular lipids, and degradation via beta-oxidation. Plays an important role in fatty acid metabolism in brain and the acyl-CoAs produced may be utilized exclusively for the synthesis of the brain lipid. The protein is Long-chain-fatty-acid--CoA ligase 6 (Acsl6) of Mus musculus (Mouse).